Consider the following 1131-residue polypeptide: Kinesin-like protein CG14535 (1131 aa).

Polar residues predominate over residues 1 to 11 (MATTSTSNMSR). A disordered region spans residues 1–25 (MATTSTSNMSRNGGFCGALQRAPPP). The Kinesin motor domain occupies 44–396 (KVKVMLRVAD…IQIASRIHRL (353 aa)). Disordered regions lie at residues 472–494 (ALKG…MMMK), 693–753 (DLPD…SRDI), 905–926 (PAYR…QGSL), and 1016–1072 (TSSE…QRHR). Residues 483–494 (SKSASNSPMMMK) are compositionally biased toward low complexity. Residues 1016–1032 (TSSEAYDSGHDSNSTPR) show a composition bias toward polar residues.

Belongs to the TRAFAC class myosin-kinesin ATPase superfamily. Kinesin family. KIF26 subfamily.

Its subcellular location is the cytoplasm. It is found in the cytoskeleton. This Drosophila melanogaster (Fruit fly) protein is Kinesin-like protein CG14535.